A 257-amino-acid polypeptide reads, in one-letter code: FPILPGVWVDSTQGNFTKPKALPPAIFLICGDRAWQGIPSRPVGGPCYLGKLTMLAPNHTDIHKILANSSQTGVRHFRSVSHLDDTCSDEVQLWGPTARIFASILAPGVAAAQALREIERLACWSVKQANLTTSLLGDLLDDVTSIRHAVLQNRAAIDFLLLAHGHGCKDIAGMCCFNLSDHSEAIQKKFQLMKEHVNKIGVDSDPIGSWLRGLFGGIGEWAIHLLKGLLLGLVVILLLVVCLPCLLQFVSSSTRKM.

Over phenylalanine 1–leucine 229 the chain is Extracellular. 3 N-linked (GlcNAc...) asparagine; by host glycosylation sites follow: asparagine 15, asparagine 58, and asparagine 68. A fusion peptide region spans residues glycine 95–leucine 115. Residues alanine 112–leucine 162 adopt a coiled-coil conformation. Asparagine 130 carries an N-linked (GlcNAc...) asparagine; by host glycan. Residues leucine 151–glycine 167 form an immunosuppression region. Asparagine 178 carries an N-linked (GlcNAc...) asparagine; by host glycan. Positions serine 180–tryptophan 210 form a coiled coil. Residues leucine 230–valine 250 traverse the membrane as a helical segment. Cysteine 245 is lipidated: S-palmitoyl cysteine; by host. Topologically, residues serine 251–methionine 257 are cytoplasmic.

As to quaternary structure, the mature envelope protein (Env) consists of a trimer of SU-TM heterodimers attached by noncovalent interactions or by a labile interchain disulfide bond. In terms of processing, specific enzymatic cleavages in vivo yield mature proteins. Envelope glycoproteins are synthesized as an inactive precursor that is N-glycosylated and processed likely by host cell furin or by a furin-like protease in the Golgi to yield the mature SU and TM proteins. The cleavage site between SU and TM requires the minimal sequence [KR]-X-[KR]-R. Post-translationally, the transmembrane protein is palmitoylated.

The protein localises to the virion membrane. It localises to the host cell membrane. Functionally, the surface protein (SU) attaches the virus to the host cell by binding to its receptor. This interaction triggers the refolding of the transmembrane protein (TM) and is thought to activate its fusogenic potential by unmasking its fusion peptide. Fusion occurs at the host cell plasma membrane. The transmembrane protein (TM) acts as a class I viral fusion protein. Under the current model, the protein has at least 3 conformational states: pre-fusion native state, pre-hairpin intermediate state, and post-fusion hairpin state. During viral and target cell membrane fusion, the coiled coil regions (heptad repeats) assume a trimer-of-hairpins structure, positioning the fusion peptide in close proximity to the C-terminal region of the ectodomain. The formation of this structure appears to drive apposition and subsequent fusion of viral and target cell membranes. Membranes fusion leads to delivery of the nucleocapsid into the cytoplasm. This chain is Envelope glycoprotein (env), found in Galliformes.